We begin with the raw amino-acid sequence, 512 residues long: Maturase K (512 aa).

Belongs to the intron maturase 2 family. MatK subfamily.

The protein localises to the plastid. It localises to the chloroplast. In terms of biological role, usually encoded in the trnK tRNA gene intron. Probably assists in splicing its own and other chloroplast group II introns. This Lemna aequinoctialis (Lesser duckweed) protein is Maturase K.